We begin with the raw amino-acid sequence, 874 residues long: Alanine--tRNA ligase (874 aa).

The Zn(2+) site is built by His-559, His-563, Cys-661, and His-665.

The protein belongs to the class-II aminoacyl-tRNA synthetase family. It depends on Zn(2+) as a cofactor.

The protein resides in the cytoplasm. The enzyme catalyses tRNA(Ala) + L-alanine + ATP = L-alanyl-tRNA(Ala) + AMP + diphosphate. Catalyzes the attachment of alanine to tRNA(Ala) in a two-step reaction: alanine is first activated by ATP to form Ala-AMP and then transferred to the acceptor end of tRNA(Ala). Also edits incorrectly charged Ser-tRNA(Ala) and Gly-tRNA(Ala) via its editing domain. The polypeptide is Alanine--tRNA ligase (Microcystis aeruginosa (strain NIES-843 / IAM M-2473)).